A 712-amino-acid chain; its full sequence is Ribosomal RNA large subunit methyltransferase K/L (712 aa).

The THUMP domain maps to 43 to 154 (TAYRCCLWTR…GEKGVLGLDM (112 aa)).

This sequence belongs to the methyltransferase superfamily. RlmKL family.

It is found in the cytoplasm. It catalyses the reaction guanosine(2445) in 23S rRNA + S-adenosyl-L-methionine = N(2)-methylguanosine(2445) in 23S rRNA + S-adenosyl-L-homocysteine + H(+). The enzyme catalyses guanosine(2069) in 23S rRNA + S-adenosyl-L-methionine = N(2)-methylguanosine(2069) in 23S rRNA + S-adenosyl-L-homocysteine + H(+). Functionally, specifically methylates the guanine in position 2445 (m2G2445) and the guanine in position 2069 (m7G2069) of 23S rRNA. The sequence is that of Ribosomal RNA large subunit methyltransferase K/L from Photobacterium profundum (strain SS9).